Reading from the N-terminus, the 233-residue chain is Large ribosomal subunit protein uL1 (233 aa).

This sequence belongs to the universal ribosomal protein uL1 family. As to quaternary structure, part of the 50S ribosomal subunit.

Functionally, binds directly to 23S rRNA. The L1 stalk is quite mobile in the ribosome, and is involved in E site tRNA release. Its function is as follows. Protein L1 is also a translational repressor protein, it controls the translation of the L11 operon by binding to its mRNA. The protein is Large ribosomal subunit protein uL1 of Psychrobacter cryohalolentis (strain ATCC BAA-1226 / DSM 17306 / VKM B-2378 / K5).